Consider the following 201-residue polypeptide: Acyl-homoserine-lactone synthase (201 aa).

It belongs to the autoinducer synthase family.

The enzyme catalyses a fatty acyl-[ACP] + S-adenosyl-L-methionine = an N-acyl-L-homoserine lactone + S-methyl-5'-thioadenosine + holo-[ACP] + H(+). Its function is as follows. Required for the synthesis of BHL (N-butanoyl-L-homoserine lactone), and HHL (N-hexanoyl-L-homoserine lactone) autoinducer molecules which bind to RhlR and thus acts in elastase biosynthesis regulation. The chain is Acyl-homoserine-lactone synthase (rhlI) from Pseudomonas aeruginosa (strain ATCC 15692 / DSM 22644 / CIP 104116 / JCM 14847 / LMG 12228 / 1C / PRS 101 / PAO1).